Here is a 152-residue protein sequence, read N- to C-terminus: MAKLVFISFLVASFCLIGCFGGEAEIKQFWLVRKNAIFQFRFATVEIEKTIYQKVKHILVKAKDDDQKNCIDGVKSEAIIESRAIVKGTVGKILPAIDEVSEALRTGDENKLKAFNNNWNYPEYKVKELANFKLKAAALAPTVQEKLDKCVA.

Residues Met1–Gly21 form the signal peptide. The cysteines at positions 70 and 150 are disulfide-linked.

The protein belongs to the insect vpf1 family. In terms of tissue distribution, expressed by the venom gland (posterior main gland) (at protein level).

The protein localises to the secreted. This is Venom protein family 1 protein 2 from Platymeris rhadamanthus (Red spot assassin bug).